The following is a 209-amino-acid chain: Large ribosomal subunit protein uL3 (209 aa).

The segment at 126–148 is disordered; it reads HGQSRGPMAHGSRYHRRPGSMGP.

This sequence belongs to the universal ribosomal protein uL3 family. Part of the 50S ribosomal subunit. Forms a cluster with proteins L14 and L19.

In terms of biological role, one of the primary rRNA binding proteins, it binds directly near the 3'-end of the 23S rRNA, where it nucleates assembly of the 50S subunit. This is Large ribosomal subunit protein uL3 from Listeria monocytogenes serotype 4b (strain CLIP80459).